Here is a 364-residue protein sequence, read N- to C-terminus: Cell division protein FtsZ 1 (364 aa).

GTP is bound by residues 47 to 48, 97 to 99, 134 to 136, E165, R169, and D212; these read GA, AGG, and GTG.

It belongs to the FtsZ family. In terms of assembly, homodimer. Polymerizes to form a dynamic ring structure in a strictly GTP-dependent manner. Interacts directly with several other division proteins.

It is found in the cytoplasm. In terms of biological role, essential cell division protein that forms a contractile ring structure (Z ring) at the future cell division site. The regulation of the ring assembly controls the timing and the location of cell division. One of the functions of the FtsZ ring is to recruit other cell division proteins to the septum to produce a new cell wall between the dividing cells. Binds GTP and shows GTPase activity. This chain is Cell division protein FtsZ 1, found in Methanocaldococcus jannaschii (strain ATCC 43067 / DSM 2661 / JAL-1 / JCM 10045 / NBRC 100440) (Methanococcus jannaschii).